A 112-amino-acid chain; its full sequence is Ribosome-binding factor A (112 aa).

Belongs to the RbfA family. Monomer. Binds 30S ribosomal subunits, but not 50S ribosomal subunits or 70S ribosomes.

It is found in the cytoplasm. Functionally, one of several proteins that assist in the late maturation steps of the functional core of the 30S ribosomal subunit. Associates with free 30S ribosomal subunits (but not with 30S subunits that are part of 70S ribosomes or polysomes). Required for efficient processing of 16S rRNA. May interact with the 5'-terminal helix region of 16S rRNA. This is Ribosome-binding factor A from Mycoplasmopsis pulmonis (strain UAB CTIP) (Mycoplasma pulmonis).